We begin with the raw amino-acid sequence, 320 residues long: GTP 3',8-cyclase (320 aa).

Residues 4-226 enclose the Radical SAM core domain; the sequence is TFQRSINYMR…PIITDATSPA (223 aa). GTP is bound at residue Arg-13. Residues Cys-20 and Cys-24 each contribute to the [4Fe-4S] cluster site. S-adenosyl-L-methionine is bound at residue Tyr-26. Position 27 (Cys-27) interacts with [4Fe-4S] cluster. Position 63 (Arg-63) interacts with GTP. Gly-67 contacts S-adenosyl-L-methionine. Thr-94 is a binding site for GTP. Ser-118 is a binding site for S-adenosyl-L-methionine. Residue Lys-155 coordinates GTP. An S-adenosyl-L-methionine-binding site is contributed by Met-189. [4Fe-4S] cluster is bound by residues Cys-249 and Cys-252. 254–256 lines the GTP pocket; that stretch reads RIR. Cys-266 is a binding site for [4Fe-4S] cluster.

This sequence belongs to the radical SAM superfamily. MoaA family. As to quaternary structure, monomer and homodimer. Requires [4Fe-4S] cluster as cofactor.

It carries out the reaction GTP + AH2 + S-adenosyl-L-methionine = (8S)-3',8-cyclo-7,8-dihydroguanosine 5'-triphosphate + 5'-deoxyadenosine + L-methionine + A + H(+). Its pathway is cofactor biosynthesis; molybdopterin biosynthesis. Functionally, catalyzes the cyclization of GTP to (8S)-3',8-cyclo-7,8-dihydroguanosine 5'-triphosphate. The polypeptide is GTP 3',8-cyclase (Alkaliphilus metalliredigens (strain QYMF)).